A 49-amino-acid polypeptide reads, in one-letter code: Large ribosomal subunit protein bL33B (49 aa).

It belongs to the bacterial ribosomal protein bL33 family.

This is Large ribosomal subunit protein bL33B from Levilactobacillus brevis (strain ATCC 367 / BCRC 12310 / CIP 105137 / JCM 1170 / LMG 11437 / NCIMB 947 / NCTC 947) (Lactobacillus brevis).